Here is a 137-residue protein sequence, read N- to C-terminus: Large ribosomal subunit protein uL16 (137 aa).

This sequence belongs to the universal ribosomal protein uL16 family. Part of the 50S ribosomal subunit.

Its function is as follows. Binds 23S rRNA and is also seen to make contacts with the A and possibly P site tRNAs. The protein is Large ribosomal subunit protein uL16 of Streptococcus thermophilus (strain CNRZ 1066).